The primary structure comprises 372 residues: Serine proteinase inhibitor 1 (372 aa).

This sequence belongs to the serpin family. Poxviruses subfamily.

Its subcellular location is the host cytoplasm. Functionally, plays a role in mediating viral host range. May act to inhibit a caspase independent form of apoptosis to allow efficient virus replication in infected cells. This is Serine proteinase inhibitor 1 (OPG208) from Homo sapiens (Human).